A 319-amino-acid polypeptide reads, in one-letter code: Acetyl-coenzyme A carboxylase carboxyl transferase subunit alpha (319 aa).

The 255-residue stretch at 39-293 (RLQKKSNDLT…KAVLEKQLHE (255 aa)) folds into the CoA carboxyltransferase C-terminal domain.

The protein belongs to the AccA family. As to quaternary structure, acetyl-CoA carboxylase is a heterohexamer composed of biotin carboxyl carrier protein (AccB), biotin carboxylase (AccC) and two subunits each of ACCase subunit alpha (AccA) and ACCase subunit beta (AccD).

It localises to the cytoplasm. It carries out the reaction N(6)-carboxybiotinyl-L-lysyl-[protein] + acetyl-CoA = N(6)-biotinyl-L-lysyl-[protein] + malonyl-CoA. It participates in lipid metabolism; malonyl-CoA biosynthesis; malonyl-CoA from acetyl-CoA: step 1/1. Its function is as follows. Component of the acetyl coenzyme A carboxylase (ACC) complex. First, biotin carboxylase catalyzes the carboxylation of biotin on its carrier protein (BCCP) and then the CO(2) group is transferred by the carboxyltransferase to acetyl-CoA to form malonyl-CoA. The chain is Acetyl-coenzyme A carboxylase carboxyl transferase subunit alpha from Neisseria meningitidis serogroup C (strain 053442).